The following is a 281-amino-acid chain: Bifunctional protein FolD (281 aa).

NADP(+) contacts are provided by residues 164 to 166 (GRS), Ser-189, and Thr-230.

The protein belongs to the tetrahydrofolate dehydrogenase/cyclohydrolase family. Homodimer.

The enzyme catalyses (6R)-5,10-methylene-5,6,7,8-tetrahydrofolate + NADP(+) = (6R)-5,10-methenyltetrahydrofolate + NADPH. The catalysed reaction is (6R)-5,10-methenyltetrahydrofolate + H2O = (6R)-10-formyltetrahydrofolate + H(+). The protein operates within one-carbon metabolism; tetrahydrofolate interconversion. In terms of biological role, catalyzes the oxidation of 5,10-methylenetetrahydrofolate to 5,10-methenyltetrahydrofolate and then the hydrolysis of 5,10-methenyltetrahydrofolate to 10-formyltetrahydrofolate. This Dictyoglomus turgidum (strain DSM 6724 / Z-1310) protein is Bifunctional protein FolD.